The following is a 254-amino-acid chain: Ribosomal RNA small subunit methyltransferase J (254 aa).

S-adenosyl-L-methionine is bound by residues 107-108, 123-124, and aspartate 177; these read RD and ER.

Belongs to the methyltransferase superfamily. RsmJ family.

Its subcellular location is the cytoplasm. The enzyme catalyses guanosine(1516) in 16S rRNA + S-adenosyl-L-methionine = N(2)-methylguanosine(1516) in 16S rRNA + S-adenosyl-L-homocysteine + H(+). In terms of biological role, specifically methylates the guanosine in position 1516 of 16S rRNA. The chain is Ribosomal RNA small subunit methyltransferase J from Histophilus somni (strain 129Pt) (Haemophilus somnus).